Reading from the N-terminus, the 624-residue chain is tRNA uridine 5-carboxymethylaminomethyl modification enzyme MnmG (624 aa).

14 to 19 provides a ligand contact to FAD; the sequence is GAGHAG. NAD(+) is bound at residue 273 to 287; that stretch reads GTRYCPSFEDKVVRF.

The protein belongs to the MnmG family. In terms of assembly, homodimer. Heterotetramer of two MnmE and two MnmG subunits. FAD is required as a cofactor.

It localises to the cytoplasm. Its function is as follows. NAD-binding protein involved in the addition of a carboxymethylaminomethyl (cmnm) group at the wobble position (U34) of certain tRNAs, forming tRNA-cmnm(5)s(2)U34. The protein is tRNA uridine 5-carboxymethylaminomethyl modification enzyme MnmG of Syntrophomonas wolfei subsp. wolfei (strain DSM 2245B / Goettingen).